Consider the following 300-residue polypeptide: Ribosomal protein bS6--L-glutamate ligase (300 aa).

An ATP-grasp domain is found at 104 to 287 (LQLLARQGID…IAGRMIQWIE (184 aa)). ATP-binding positions include K141, 178–179 (EY), D187, and 211–213 (RSN). D248, E260, and N262 together coordinate Mg(2+). D248, E260, and N262 together coordinate Mn(2+).

This sequence belongs to the RimK family. The cofactor is Mg(2+). Requires Mn(2+) as cofactor.

In terms of biological role, an L-glutamate ligase that catalyzes the ATP-dependent post-translational addition of glutamate residues to the C-terminus of ribosomal protein bS6 (RpsF). Is also able to catalyze the synthesis of poly-alpha-glutamate in vitro, via ATP hydrolysis from unprotected glutamate as substrate. The number of glutamate residues added to either RpsF or to poly-alpha-glutamate changes with pH. This Salmonella schwarzengrund (strain CVM19633) protein is Ribosomal protein bS6--L-glutamate ligase.